The following is a 280-amino-acid chain: Vitamin B12-binding protein (280 aa).

A signal peptide spans 1 to 27 (MMPLGLFPLPRAAVVLLISLLTLPAQA). Residues 30–277 (RVISLSPSTT…QMASIPTPVA (248 aa)) form the Fe/B12 periplasmic-binding domain. Tyr-57 is a cyanocob(III)alamin binding site. The cysteines at positions 190 and 266 are disulfide-linked.

This sequence belongs to the BtuF family. The complex is composed of two ATP-binding proteins (BtuD), two transmembrane proteins (BtuC) and a solute-binding protein (BtuF).

The protein resides in the periplasm. Part of the ABC transporter complex BtuCDF involved in vitamin B12 import. Binds vitamin B12 and delivers it to the periplasmic surface of BtuC. This is Vitamin B12-binding protein from Yersinia pseudotuberculosis serotype O:1b (strain IP 31758).